The primary structure comprises 485 residues: Polyol:NADP oxidoreductase (485 aa).

Belongs to the mannitol dehydrogenase family.

The protein localises to the cytoplasm. In Gluconobacter oxydans (strain 621H) (Gluconobacter suboxydans), this protein is Polyol:NADP oxidoreductase (por).